We begin with the raw amino-acid sequence, 334 residues long: N-acetyl-S-alkylcysteine monooxygenase (334 aa).

It to bacterial alkanal monooxygenase alpha and beta chains.

It catalyses the reaction N-acetyl-S-benzyl-L-cysteine + FMNH2 + O2 = (R)-N-acetyl-S-benzyl-L-cysteine sulfoxide + FMN + H2O + H(+). The enzyme catalyses N-acetyl-S-methyl-L-cysteine + FMNH2 + O2 = (R)-N-acetyl-S-methyl-L-cysteine sulfoxide + FMN + H2O + H(+). It participates in amino-acid metabolism. Involved in a cysteine salvage pathway from S-alkylcysteine. Catalyzes the oxidation of N-acetyl-S-benzyl-L-cysteine and N-acetyl-S-methyl-L-cysteine to (R)-N-acetyl-S-benzyl-L-cysteine sulfoxide and (R)-N-acetyl-S-methyl-L-cysteine sulfoxide, respectively. This pathway is likely important in the catabolism of alkylated cysteine generated by proteolysis of alkylated glutathione formed in the detoxification of a wide range of electrophiles. The protein is N-acetyl-S-alkylcysteine monooxygenase of Bacillus subtilis (strain 168).